The sequence spans 619 residues: Phosphomethylpyrimidine synthase (619 aa).

Residues 93 to 104 (IKPEDNGLKGPD) show a composition bias toward basic and acidic residues. The disordered stretch occupies residues 93-114 (IKPEDNGLKGPDRSGGVTPFPN). Substrate is bound by residues Asn217, Met246, Tyr275, His311, 331 to 333 (SRG), 372 to 375 (DGLR), and Glu411. His415 contacts Zn(2+). A substrate-binding site is contributed by Tyr438. Zn(2+) is bound at residue His479. The [4Fe-4S] cluster site is built by Cys559, Cys562, and Cys567.

This sequence belongs to the ThiC family. As to quaternary structure, homodimer. Requires [4Fe-4S] cluster as cofactor.

The enzyme catalyses 5-amino-1-(5-phospho-beta-D-ribosyl)imidazole + S-adenosyl-L-methionine = 4-amino-2-methyl-5-(phosphooxymethyl)pyrimidine + CO + 5'-deoxyadenosine + formate + L-methionine + 3 H(+). The protein operates within cofactor biosynthesis; thiamine diphosphate biosynthesis. Catalyzes the synthesis of the hydroxymethylpyrimidine phosphate (HMP-P) moiety of thiamine from aminoimidazole ribotide (AIR) in a radical S-adenosyl-L-methionine (SAM)-dependent reaction. This Rhizorhabdus wittichii (strain DSM 6014 / CCUG 31198 / JCM 15750 / NBRC 105917 / EY 4224 / RW1) (Sphingomonas wittichii) protein is Phosphomethylpyrimidine synthase.